Here is a 287-residue protein sequence, read N- to C-terminus: Ribonuclease HII (287 aa).

Residues 61 to 287 (ALQIGVDEAG…FAPVRKALES (227 aa)) enclose the RNase H type-2 domain. A divalent metal cation is bound by residues D67, E68, and D186.

The protein belongs to the RNase HII family. Requires Mn(2+) as cofactor. Mg(2+) is required as a cofactor.

It is found in the cytoplasm. It carries out the reaction Endonucleolytic cleavage to 5'-phosphomonoester.. Its function is as follows. Endonuclease that specifically degrades the RNA of RNA-DNA hybrids. The chain is Ribonuclease HII from Psychrobacter arcticus (strain DSM 17307 / VKM B-2377 / 273-4).